The following is a 177-amino-acid chain: uncharacterized protein (177 aa).

The protein belongs to the flavoredoxin family. FMN is required as a cofactor.

This is an uncharacterized protein from Archaeoglobus fulgidus (strain ATCC 49558 / DSM 4304 / JCM 9628 / NBRC 100126 / VC-16).